The primary structure comprises 321 residues: MNNTAHSMSEKVLLVASLEAARYGQYQQAVKGLQAESGLLETHMIDRITDLAYAPPADYFDAVYMMLPSEGVEWAAALPKLRASMIPGAKLRVSVVNENDPSSFLSQVRAELTIAGFTDIQTYENASIESRRPASSSVAEKDSTASSGMGAVKLRRKPNENGGHQQKKALLWATQPETHMDTEAKLQEHARTVSPASRREDCTVDFSAPRTRRKRACKGCTCGLRELEEEDERNSNLVQLDPSEVGGTGGKRTEVTTTVKGPNGEEHTVRRIQVDTRGATSSCGSCFLGDAFRCSSCPYLGLPAFEPGQKVEIPANMDDDL.

Residues 1–140 form an N-terminal SAM-like domain region; sequence MNNTAHSMSE…RRPASSSVAE (140 aa). A compositionally biased stretch (polar residues) spans 128 to 138; the sequence is IESRRPASSSV. The disordered stretch occupies residues 128–166; it reads IESRRPASSSVAEKDSTASSGMGAVKLRRKPNENGGHQQ. Residues 140 to 177 are linker; sequence EKDSTASSGMGAVKLRRKPNENGGHQQKKALLWATQPE. [2Fe-2S] cluster is bound by residues Cys202, Cys217, Cys220, and Cys222. Residues 202 to 222 form a fe-S binding site A region; that stretch reads CTVDFSAPRTRRKRACKGCTC. The tract at residues 239–263 is disordered; sequence QLDPSEVGGTGGKRTEVTTTVKGPN. [4Fe-4S] cluster contacts are provided by Cys283, Cys286, Cys294, and Cys297. 2 short sequence motifs (cx2C motif) span residues 283–286 and 294–297; these read CGSC and CSSC. The tract at residues 283–297 is fe-S binding site B; the sequence is CGSCFLGDAFRCSSC.

It belongs to the anamorsin family. In terms of assembly, monomer. Interacts with TAH18. Interacts with MIA40. Requires [2Fe-2S] cluster as cofactor. It depends on [4Fe-4S] cluster as a cofactor.

Its subcellular location is the cytoplasm. It is found in the mitochondrion intermembrane space. Its function is as follows. Component of the cytosolic iron-sulfur (Fe-S) protein assembly (CIA) machinery required for the maturation of extramitochondrial Fe-S proteins. Part of an electron transfer chain functioning in an early step of cytosolic Fe-S biogenesis, facilitating the de novo assembly of a [4Fe-4S] cluster on the scaffold complex CFD1-NBP35. Electrons are transferred to DRE2 from NADPH via the FAD- and FMN-containing protein TAH18. TAH18-DRE2 are also required for the assembly of the diferric tyrosyl radical cofactor of ribonucleotide reductase (RNR), probably by providing electrons for reduction during radical cofactor maturation in the catalytic small subunit RNR2. This is Fe-S cluster assembly protein DRE2 from Malassezia globosa (strain ATCC MYA-4612 / CBS 7966) (Dandruff-associated fungus).